The chain runs to 32 residues: uncharacterized protein (32 aa).

This is an uncharacterized protein from Ornithodoros (relapsing fever ticks).